Consider the following 228-residue polypeptide: L-ribulose-5-phosphate 4-epimerase UlaF (228 aa).

Substrate-binding positions include 26-27 (GN), 43-44 (SG), and 72-73 (SS). Zn(2+) is bound by residues Asp-74, His-93, and His-95. Asp-118 acts as the Proton donor/acceptor in catalysis. His-167 is a binding site for Zn(2+). Tyr-225 acts as the Proton donor/acceptor in catalysis.

The protein belongs to the aldolase class II family. AraD/FucA subfamily. Requires Zn(2+) as cofactor.

It catalyses the reaction L-ribulose 5-phosphate = D-xylulose 5-phosphate. Its pathway is cofactor degradation; L-ascorbate degradation; D-xylulose 5-phosphate from L-ascorbate: step 4/4. Catalyzes the isomerization of L-ribulose 5-phosphate to D-xylulose 5-phosphate. Is involved in the anaerobic L-ascorbate utilization. The protein is L-ribulose-5-phosphate 4-epimerase UlaF of Shigella flexneri.